Here is a 435-residue protein sequence, read N- to C-terminus: MDTWEDDRVDQRACLICGDRATGLHYGIISCEGCKGFFKRSICNKRVYRCSRDKNCVMSRKQRNRCQYCRLLKCLQMGMNRKAIREDGMPGGRNKSIGPVQISDEEIERIMSGQEFEEEANTSWSNNGDSDHSSPGNGVSESNQPSPVSTPSSSRSMELNGFGSLRDQYLGTPGPMHYQYLPHLFSYSAHPTLIPTQSRSLDPQSHTLINQLLTAEDIEPLSTPMLIEDGYKVTQSELFALLCRLADELLFRQITWVKKLPFFCDLSIKDYTCLLSTTWQELILLSSLTTYSKQIFGDLADVTSKYSPSEDELHRFSEDGMEVMERLIYLFRKFSQLKVSNEEYVCMKAINFLNQDIQGISSVSQVEQLNKRYWYVCQDFTEYRYPHQPNRFPDLMMCLPEVRYIAGKLVNVPLEQLPLLFKAFLHSCKTSLTKE.

The segment at residues 11–86 (QRACLICGDR…MGMNRKAIRE (76 aa)) is a DNA-binding region (nuclear receptor). 2 NR C4-type zinc fingers span residues 14–34 (CLICGDRATGLHYGIISCEGC) and 50–69 (CSRDKNCVMSRKQRNRCQYC). A disordered region spans residues 84 to 157 (IREDGMPGGR…VSTPSSSRSM (74 aa)). The span at 121–141 (NTSWSNNGDSDHSSPGNGVSE) shows a compositional bias: polar residues. The segment covering 142-156 (SNQPSPVSTPSSSRS) has biased composition (low complexity). The NR LBD domain maps to 204–435 (QSHTLINQLL…HSCKTSLTKE (232 aa)).

It belongs to the nuclear hormone receptor family. NR6 subfamily. Homodimer.

The protein resides in the cytoplasm. It is found in the nucleus. Its function is as follows. Probable orphan nuclear receptor. Binds to a response element containing repeats of the motif 5'-AGGTCA-3'. Required for anterior-posterior patterning during organogenesis. Acts with chordin to play a role in patterning the midbrain-hindbrain. Isoform Em is required for integrin-mediated cell matrix interaction during neurulation and for the morphogenetic movements leading to formation of the neural tube. Also mediates the effect of retinoic acid on primary neurogenesis. In Xenopus tropicalis (Western clawed frog), this protein is Nuclear receptor subfamily 6 group A member 1.